A 306-amino-acid polypeptide reads, in one-letter code: D-alanine--D-alanine ligase (306 aa).

An ATP-grasp domain is found at Lys-107 to Glu-303. Residue Ile-134–Thr-189 coordinates ATP. Mg(2+) contacts are provided by Asp-257, Glu-270, and Asn-272.

The protein belongs to the D-alanine--D-alanine ligase family. Mg(2+) is required as a cofactor. Mn(2+) serves as cofactor.

The protein localises to the cytoplasm. It carries out the reaction 2 D-alanine + ATP = D-alanyl-D-alanine + ADP + phosphate + H(+). It participates in cell wall biogenesis; peptidoglycan biosynthesis. Its function is as follows. Cell wall formation. The polypeptide is D-alanine--D-alanine ligase (Pseudoalteromonas translucida (strain TAC 125)).